The following is a 206-amino-acid chain: MLKVLYVIFTIFGYIWPIYSVMFHLTPNTQKCLKEDIQANQLVMGEYEVSDVPGQIIDYIARDTKGHILSQKEHITKGKFSFMSEVYDAYEICFISKVPPHQRGISQEVSLVTKKGVETKSYEGIGEASKLKPLEVDLKRLEDLSDSIVRDFALMRKREEEMRDTNEKTNSRVLFFSIFSMCCLLGLATWQVLYLRRYFKAKKLIE.

An N-terminal signal peptide occupies residues 1–20 (MLKVLYVIFTIFGYIWPIYS). The Lumenal segment spans residues 21–172 (VMFHLTPNTQ…RDTNEKTNSR (152 aa)). Positions 30 to 140 (QKCLKEDIQA…LKPLEVDLKR (111 aa)) constitute a GOLD domain. The chain crosses the membrane as a helical span at residues 173–193 (VLFFSIFSMCCLLGLATWQVL). Residues 194–206 (YLRRYFKAKKLIE) are Cytoplasmic-facing.

The protein belongs to the EMP24/GP25L family.

The protein resides in the membrane. Its function is as follows. Eca and bai are essential, though not redundant, for dorsoventral patterning of the embryo. Specifically required during early embryogenesis for the activity of maternal tkv, while the zygotic tkv is not affected. This Drosophila virilis (Fruit fly) protein is Transmembrane emp24 domain-containing protein bai.